A 409-amino-acid chain; its full sequence is Argininosuccinate synthase (409 aa).

ATP contacts are provided by residues 13–21 (AYSGGLDTS) and A40. Y91 and S96 together coordinate L-citrulline. An ATP-binding site is contributed by G121. Residues T123, N127, and D128 each coordinate L-aspartate. Residue N127 coordinates L-citrulline. Positions 131, 183, 192, 268, and 280 each coordinate L-citrulline.

This sequence belongs to the argininosuccinate synthase family. Type 1 subfamily. Homotetramer.

It localises to the cytoplasm. It catalyses the reaction L-citrulline + L-aspartate + ATP = 2-(N(omega)-L-arginino)succinate + AMP + diphosphate + H(+). It functions in the pathway amino-acid biosynthesis; L-arginine biosynthesis; L-arginine from L-ornithine and carbamoyl phosphate: step 2/3. The chain is Argininosuccinate synthase from Saccharophagus degradans (strain 2-40 / ATCC 43961 / DSM 17024).